A 784-amino-acid chain; its full sequence is Ubiquitin carboxyl-terminal hydrolase 1 (784 aa).

2 disordered regions span residues 1 to 21 and 34 to 56; these read MPGVIPSESNGLSRGSPSKKN and KRALDFTDSQENEEKTSEYRGSE. Polar residues predominate over residues 7–16; sequence SESNGLSRGS. Phosphoserine occurs at positions 16 and 42. Over residues 45–56 the composition is skewed to basic and acidic residues; it reads NEEKTSEYRGSE. Serine 67 is modified (phosphoserine). A USP domain is found at 81–784; sequence VGLNNLGNTC…TPYLLFYKKL (704 aa). The active-site Nucleophile is the cysteine 90. 2 stretches are compositionally biased toward basic and acidic residues: residues 233–243 and 252–264; these read VEEQSLQKEET and DSMRNTEDVKEQL. Disordered regions lie at residues 233–342 and 362–414; these read VEEQ…INWL and TTNQ…KSGN. Serine 474 carries the phosphoserine modification. Residue histidine 592 is the Proton acceptor of the active site. Residues 684-725 form a disordered region; that stretch reads NPDKVVGTPFTDNRNSETNDTTNGTHESDRNKESSDQTGVNM. Residues 693–708 show a composition bias toward polar residues; the sequence is FTDNRNSETNDTTNGT. Residues 709-718 show a composition bias toward basic and acidic residues; it reads HESDRNKESS. Serine 767 bears the Phosphoserine mark.

The protein belongs to the peptidase C19 family. Interacts with FANCD2 and PCNA. Interacts with WDR48. Interacts with ATAD5; the interaction regulates USP1-mediated PCNA deubiquitination. In terms of processing, autocatalytic cleavage of USP1 following UV irradiation inactivates it, leading to an increase in ubiquitinated PCNA, recruitment of POLH and translesion synthesis. Ubiquitinated by the CRL2(KLHDC2) complex following autocatalytic cleavage, leading to its degradation: the CRL2(KLHDC2) complex recognizes the diglycine (Gly-Gly) at the C-terminus.

Its subcellular location is the nucleus. It carries out the reaction Thiol-dependent hydrolysis of ester, thioester, amide, peptide and isopeptide bonds formed by the C-terminal Gly of ubiquitin (a 76-residue protein attached to proteins as an intracellular targeting signal).. Functionally, negative regulator of DNA damage repair which specifically deubiquitinates monoubiquitinated FANCD2. Also involved in PCNA-mediated translesion synthesis (TLS) by deubiquitinating monoubiquitinated PCNA. Has almost no deubiquitinating activity by itself and requires the interaction with WDR48 to have a high activity. The sequence is that of Ubiquitin carboxyl-terminal hydrolase 1 from Mus musculus (Mouse).